The primary structure comprises 131 residues: Outer membrane protein assembly factor BamE (131 aa).

Residues 1 to 16 form the signal peptide; that stretch reads MRNLLLVAAVALSTAG. The N-palmitoyl cysteine moiety is linked to residue cysteine 17. The S-diacylglycerol cysteine moiety is linked to residue cysteine 17. A disordered region spans residues 112 to 131; sequence SAPKQFGRNLARDKKKQRGR.

The protein belongs to the BamE family. As to quaternary structure, part of the Bam complex.

The protein resides in the cell outer membrane. Functionally, part of the outer membrane protein assembly complex, which is involved in assembly and insertion of beta-barrel proteins into the outer membrane. The sequence is that of Outer membrane protein assembly factor BamE from Xanthomonas campestris pv. campestris (strain ATCC 33913 / DSM 3586 / NCPPB 528 / LMG 568 / P 25).